A 102-amino-acid polypeptide reads, in one-letter code: Small ribosomal subunit protein uS10 (102 aa).

This sequence belongs to the universal ribosomal protein uS10 family. In terms of assembly, part of the 30S ribosomal subunit.

In terms of biological role, involved in the binding of tRNA to the ribosomes. This is Small ribosomal subunit protein uS10 from Pelobacter propionicus (strain DSM 2379 / NBRC 103807 / OttBd1).